The primary structure comprises 286 residues: Deleted in azoospermia-like-A (286 aa).

Residues 33-114 (NTVFVGGIDI…PAIRKICTYV (82 aa)) enclose the RRM domain. The region spanning 155-180 (ACPYPSSPPMAIQQIPVGCQQPGYFQ) is the DAZ domain.

Belongs to the RRM DAZ family. In terms of assembly, interacts with the C-terminus of pabp1 and with epabp. Prior to oocyte maturation, found in a complex with epabp and pum2 proteins and spdy1 mRNA; pum2 dissociates from the complex during maturation. As to expression, germ-line specific. Oocyte mRNA expression is first restricted to the granulo-fibrillar material (GFM) of the mitochondrial cloud and then to the oocyte germ plasm at the vegetal cortex. Remains an mRNA component of the germ plasm until the neurula stage. In 2-8 cell embryos, expressed in the germ plasm matrix between germinal granules and mitochondria. Expressed in primordial germ cells (PGCs) later in embryogenesis. In addition to the ovaries of adult females, expressed in the testis of adult and juvenile males in spermatogonia and spermatocytes. The protein is restricted to the embryonic germ plasm and primordial germ cells.

The protein resides in the cytoplasm. Its function is as follows. RNA-binding protein that is required for primordial germ cell (PGC) differentiation and indirectly necessary for the migration of PGCs through the endoderm. May promote meiotic cell division during spermatogenesis. Shows a preference for G- and U-rich RNAs and probably binds the 3'-UTR of target mRNAs. Stimulates the initiation of translation of mRNAs through the recruitment of poly(A)-binding proteins (PABPs). This Xenopus laevis (African clawed frog) protein is Deleted in azoospermia-like-A (dazl-a).